We begin with the raw amino-acid sequence, 92 residues long: Small ribosomal subunit protein uS19 (92 aa).

This sequence belongs to the universal ribosomal protein uS19 family.

Its function is as follows. Protein S19 forms a complex with S13 that binds strongly to the 16S ribosomal RNA. This chain is Small ribosomal subunit protein uS19, found in Bradyrhizobium sp. (strain BTAi1 / ATCC BAA-1182).